The chain runs to 117 residues: Chondroitin proteoglycan 7 (117 aa).

A signal peptide spans Met1–Ala19. The segment at Val31 to Val97 is disordered. 2 stretches are compositionally biased toward low complexity: residues Glu32–Ser41 and Glu48–Ser57. O-linked (Xyl...) (chondroitin sulfate) serine glycosylation is found at Ser66, Ser70, Ser74, Ser84, and Ser88. Residues Gly75–Gly95 show a composition bias toward low complexity. An N-linked (GlcNAc...) asparagine glycan is attached at Asn91.

In Caenorhabditis briggsae, this protein is Chondroitin proteoglycan 7 (cpg-7).